A 567-amino-acid polypeptide reads, in one-letter code: MSARPAQPNIYAPIRTSLSGYPSPTHSGSSTPASLEFSDGRLPENNVERDMSKVVERVALLGEADEGAVIVEGEDKVTKFVWMLVSAAAISGLLFGYDTAAISGMLVIIKDDLGTILSSWQKEVITSATTLGALLGGLAAGCVSDFTGRRLVIVFANVAFIGGSICQAACHTVAAMIAGRFIVGLGVGLASCIVPLYIGELAPTMIRGRLVTINCVAVTLGQVVAYAIGASFQNVHNGWRWIVGLGAMPSFVQLAAIGFLPESPRILLLRSDVAGARAITAKIYPLATIEQVDRKIEIMKAAVDQSIEYNANSTWFERLKSLVMVGTNRRALIIGCGLQAAQQLCGFNTLMYYSATIFAMLGFNNATAVGLIVATVNVLFTLVALKIVDPVGRRRTMLFTLPIMILALVFAAIFFYYLTLSTNGILIEDHDYPRSLSILVLLSMLLYVAGYATGLGNIPWQQGELFRLEVRGIGTSICTAVNWSCNMLIAGTFLSLMDAATPSGAFGIYAGFCVIGWVFCWMLYPETSGLSLEEVYFVFEEGFGIKKSQQLRKQKLVEAAKLKAIFE.

The Cytoplasmic portion of the chain corresponds to 1–88 (MSARPAQPNI…KFVWMLVSAA (88 aa)). Residues 14-42 (IRTSLSGYPSPTHSGSSTPASLEFSDGRL) form a disordered region. Over residues 16–33 (TSLSGYPSPTHSGSSTPA) the composition is skewed to polar residues. A helical transmembrane segment spans residues 89–109 (AISGLLFGYDTAAISGMLVII). The Extracellular segment spans residues 110–123 (KDDLGTILSSWQKE). A helical membrane pass occupies residues 124–144 (VITSATTLGALLGGLAAGCVS). Topologically, residues 145 to 150 (DFTGRR) are cytoplasmic. A helical transmembrane segment spans residues 151-171 (LVIVFANVAFIGGSICQAACH). Over 172–180 (TVAAMIAGR) the chain is Extracellular. Residues 181 to 201 (FIVGLGVGLASCIVPLYIGEL) form a helical membrane-spanning segment. Residues 202-209 (APTMIRGR) lie on the Cytoplasmic side of the membrane. The helical transmembrane segment at 210–230 (LVTINCVAVTLGQVVAYAIGA) threads the bilayer. The Extracellular segment spans residues 231–240 (SFQNVHNGWR). A helical membrane pass occupies residues 241 to 261 (WIVGLGAMPSFVQLAAIGFLP). Residues 262-343 (ESPRILLLRS…IGCGLQAAQQ (82 aa)) lie on the Cytoplasmic side of the membrane. Residues 344–364 (LCGFNTLMYYSATIFAMLGFN) form a helical membrane-spanning segment. The N-linked (GlcNAc...) asparagine glycan is linked to N365. The Extracellular portion of the chain corresponds to 365–367 (NAT). The helical transmembrane segment at 368–388 (AVGLIVATVNVLFTLVALKIV) threads the bilayer. Residues 389–397 (DPVGRRRTM) lie on the Cytoplasmic side of the membrane. A helical membrane pass occupies residues 398-418 (LFTLPIMILALVFAAIFFYYL). At 419–435 (TLSTNGILIEDHDYPRS) the chain is on the extracellular side. A helical membrane pass occupies residues 436 to 456 (LSILVLLSMLLYVAGYATGLG). At 457–476 (NIPWQQGELFRLEVRGIGTS) the chain is on the cytoplasmic side. A helical membrane pass occupies residues 477–497 (ICTAVNWSCNMLIAGTFLSLM). The Extracellular segment spans residues 498–503 (DAATPS). A helical membrane pass occupies residues 504–524 (GAFGIYAGFCVIGWVFCWMLY). The Cytoplasmic segment spans residues 525-567 (PETSGLSLEEVYFVFEEGFGIKKSQQLRKQKLVEAAKLKAIFE).

It belongs to the major facilitator superfamily. Sugar transporter (TC 2.A.1.1) family.

The protein resides in the cell membrane. It catalyses the reaction myo-inositol(out) + H(+)(out) = myo-inositol(in) + H(+)(in). Its function is as follows. May function as a transporter or as a sensor for myo-inositol. In Cryptococcus neoformans var. grubii serotype A (strain H99 / ATCC 208821 / CBS 10515 / FGSC 9487) (Filobasidiella neoformans var. grubii), this protein is Myo-inositol transporter 1.